The sequence spans 156 residues: Small ribosomal subunit protein uS7 (156 aa).

The protein belongs to the universal ribosomal protein uS7 family. As to quaternary structure, part of the 30S ribosomal subunit. Contacts proteins S9 and S11.

In terms of biological role, one of the primary rRNA binding proteins, it binds directly to 16S rRNA where it nucleates assembly of the head domain of the 30S subunit. Is located at the subunit interface close to the decoding center, probably blocks exit of the E-site tRNA. The sequence is that of Small ribosomal subunit protein uS7 from Actinobacillus pleuropneumoniae serotype 5b (strain L20).